A 328-amino-acid polypeptide reads, in one-letter code: MSEKIRVLLYYKYVSIENAQEYAAKHLEFCKSIGLKGRILIADEGINGTVSGDYETTQKYMDWVHSDERFADLWFKIDEENQQAFRKMFVRYKKEIVHLGLEDNNFDSDINPLETTGEYLNPKQFKEALLDEDTVVLDTRNDYEYDLGHFRGAIRPDIRNFRELPQWVRDNKDKFMEKRVVVYCTGGVRCEKFSGWMVREGFKDVGQLHGGIATYGKDPEVQGELWDGAMYVFDDRISVPINHVNPTVISKDYFDGTPCERYVNCANPFCNKQIFASEENETKYVRGCSPECRAHERNRYVQENGLSRQEWAERLEAIGESLPEFVGA.

A Rhodanese domain is found at 130 to 224 (LDEDTVVLDT…YGKDPEVQGE (95 aa)). Cys184 serves as the catalytic Cysteine persulfide intermediate.

Belongs to the TrhO family.

The enzyme catalyses uridine(34) in tRNA + AH2 + O2 = 5-hydroxyuridine(34) in tRNA + A + H2O. Catalyzes oxygen-dependent 5-hydroxyuridine (ho5U) modification at position 34 in tRNAs. This chain is tRNA uridine(34) hydroxylase, found in Streptococcus pyogenes serotype M49 (strain NZ131).